The primary structure comprises 178 residues: V-type proton ATPase subunit c''2 (178 aa).

Residues 1 to 24 (MSGVAIHASSWGAALVRISPYTFS) lie on the Lumenal side of the membrane. Residues 25–45 (AIGIAISIGVSVLGAAWGIYI) form a helical membrane-spanning segment. At 46–64 (TGSSLIGAAIEAPRITSKN) the chain is on the cytoplasmic side. A helical membrane pass occupies residues 65 to 85 (LISVIFCEAVAIYGVIVAIIL). Topologically, residues 86-108 (QTKLESVPSSKMYDAESLRAGYA) are lumenal. A helical transmembrane segment spans residues 109-129 (IFASGIIVGFANLVCGLCVGI). Over 130–147 (IGSSCALSDAQNSTLFVK) the chain is Cytoplasmic. A helical membrane pass occupies residues 148 to 168 (ILVIEIFGSALGLFGVIVGII). At 169 to 178 (MSAQATWPTK) the chain is on the lumenal side.

It belongs to the V-ATPase proteolipid subunit family. V-ATPase is a heteromultimeric enzyme composed of a peripheral catalytic V1 complex (components A to H) attached to an integral membrane V0 proton pore complex (components: a, c, c'', d and e). The proteolipid components c and c'' are present as a hexameric ring that forms the proton-conducting pore. Interacts with APD2.

Its subcellular location is the endoplasmic reticulum membrane. It localises to the golgi apparatus membrane. Its function is as follows. Proton-conducting pore forming subunit of the membrane integral V0 complex of vacuolar ATPase. V-ATPase is responsible for acidifying a variety of intracellular compartments in eukaryotic cells. The protein is V-type proton ATPase subunit c''2 (VHA-c''2) of Arabidopsis thaliana (Mouse-ear cress).